We begin with the raw amino-acid sequence, 63 residues long: Large ribosomal subunit protein uL29 (63 aa).

The protein belongs to the universal ribosomal protein uL29 family.

The polypeptide is Large ribosomal subunit protein uL29 (Klebsiella pneumoniae (strain 342)).